Here is a 358-residue protein sequence, read N- to C-terminus: Gibberellin receptor GID1B (358 aa).

Ala-2 is subject to N-acetylalanine. Residues His-113–Gly-115 carry the Involved in the stabilization of the negatively charged intermediate by the formation of the oxyanion hole motif. Gibberellin A4 is bound by residues Gly-115–Ser-116, Tyr-127, and Ser-191. Gibberellin A3 is bound by residues Ser-116, Tyr-127, Ser-191, and Phe-238. Ser-191 is a catalytic residue. Residue Asp-289 is part of the active site. Gly-320 is a gibberellin A4 binding site. Gly-320 contacts gibberellin A3.

The protein belongs to the 'GDXG' lipolytic enzyme family. As to quaternary structure, interacts with the DELLA proteins GAI, RGA, RGL1, RGL2 and RGL3 in a GA-dependent manner. As to expression, widely expressed.

The protein resides in the nucleus. Functionally, functions as a soluble gibberellin (GA) receptor. GA is an essential hormone that regulates growth and development in plants. Binds with high affinity the biologically active gibberellin GA4, but has no affinity for the biologically inactive GAs. In response to GA, interacts with specific DELLA proteins, known as repressors of GA-induced growth, and targets them for degradation via proteasome. Seems to be required for GA signaling that controls root growth, seed germination and flower development. May function as a dominant GA receptor at low GA concentrations in germination. Partially redundant with GID1A and GID1C. The sequence is that of Gibberellin receptor GID1B (GID1B) from Arabidopsis thaliana (Mouse-ear cress).